Consider the following 894-residue polypeptide: Peroxisomal hydratase-dehydrogenase-epimerase (894 aa).

Short-chain dehydrogenase like regions lie at residues 6-230 and 311-523; these read RFDG…HKNN and DFKG…CSDK. Residues valine 14, lysine 53, asparagine 99, arginine 132, tyrosine 164, lysine 168, and alanine 197 each coordinate NADP(+). The Proton acceptor role is filled by tyrosine 164. The Lowers pKa of active site Tyr role is filled by lysine 168. The active-site Proton acceptor is tyrosine 458. (3R)-3-hydroxydecanoyl-CoA contacts are provided by histidine 693, glycine 694, and lysine 723. A disordered region spans residues 763-782; that stretch reads KKPADRGASTAANKPPARSP. Residues 776-887 enclose the MaoC-like domain; the sequence is KPPARSPDAV…VKETGKLAIS (112 aa). 5 residues coordinate (3R)-3-hydroxydecanoyl-CoA: aspartate 803, asparagine 805, glycine 826, phenylalanine 851, and glycine 853.

It belongs to the short-chain dehydrogenases/reductases (SDR) family. As to quaternary structure, monomer.

The protein resides in the peroxisome. It catalyses the reaction a (3R)-3-hydroxyacyl-CoA = a (2E)-enoyl-CoA + H2O. The catalysed reaction is a (3R)-3-hydroxyacyl-CoA + NAD(+) = a 3-oxoacyl-CoA + NADH + H(+). It participates in lipid metabolism; fatty acid beta-oxidation. Functionally, second trifunctional enzyme acting on the beta-oxidation pathway for fatty acids, possessing hydratase-dehydrogenase-epimerase activities. Converts trans-2-enoyl-CoA via D-3-hydroxyacyl-CoA to 3-ketoacyl-CoA. The protein is Peroxisomal hydratase-dehydrogenase-epimerase (fox-2) of Neurospora crassa (strain ATCC 24698 / 74-OR23-1A / CBS 708.71 / DSM 1257 / FGSC 987).